We begin with the raw amino-acid sequence, 61 residues long: Small ribosomal subunit protein uS14 (61 aa).

Zn(2+) is bound by residues C24, C27, C40, and C43.

The protein belongs to the universal ribosomal protein uS14 family. Zinc-binding uS14 subfamily. In terms of assembly, part of the 30S ribosomal subunit. Contacts proteins S3 and S10. Zn(2+) is required as a cofactor.

Binds 16S rRNA, required for the assembly of 30S particles and may also be responsible for determining the conformation of the 16S rRNA at the A site. This is Small ribosomal subunit protein uS14 from Syntrophobacter fumaroxidans (strain DSM 10017 / MPOB).